A 284-amino-acid chain; its full sequence is NAD kinase (284 aa).

The active-site Proton acceptor is the D60. Residues 60–61 (DG), 134–135 (ND), K145, R162, D164, and Q235 contribute to the NAD(+) site.

It belongs to the NAD kinase family. It depends on a divalent metal cation as a cofactor.

It localises to the cytoplasm. The enzyme catalyses NAD(+) + ATP = ADP + NADP(+) + H(+). Involved in the regulation of the intracellular balance of NAD and NADP, and is a key enzyme in the biosynthesis of NADP. Catalyzes specifically the phosphorylation on 2'-hydroxyl of the adenosine moiety of NAD to yield NADP. This Treponema denticola (strain ATCC 35405 / DSM 14222 / CIP 103919 / JCM 8153 / KCTC 15104) protein is NAD kinase.